The primary structure comprises 526 residues: Phosphoenolpyruvate carboxylase (526 aa).

The protein belongs to the PEPCase type 2 family. As to quaternary structure, homotetramer. It depends on Mg(2+) as a cofactor.

It catalyses the reaction oxaloacetate + phosphate = phosphoenolpyruvate + hydrogencarbonate. Functionally, catalyzes the irreversible beta-carboxylation of phosphoenolpyruvate (PEP) to form oxaloacetate (OAA), a four-carbon dicarboxylic acid source for the tricarboxylic acid cycle. In Methanosarcina mazei (strain ATCC BAA-159 / DSM 3647 / Goe1 / Go1 / JCM 11833 / OCM 88) (Methanosarcina frisia), this protein is Phosphoenolpyruvate carboxylase.